The following is a 491-amino-acid chain: UDP-N-acetylmuramate--L-alanine ligase (491 aa).

Position 126–132 (126–132 (GTHGKTT)) interacts with ATP.

It belongs to the MurCDEF family.

It localises to the cytoplasm. It catalyses the reaction UDP-N-acetyl-alpha-D-muramate + L-alanine + ATP = UDP-N-acetyl-alpha-D-muramoyl-L-alanine + ADP + phosphate + H(+). Its pathway is cell wall biogenesis; peptidoglycan biosynthesis. Cell wall formation. The protein is UDP-N-acetylmuramate--L-alanine ligase of Shigella dysenteriae serotype 1 (strain Sd197).